A 594-amino-acid chain; its full sequence is Arginine--tRNA ligase (594 aa).

The 'HIGH' region motif lies at 139–149 (ANPTGPLHVGH).

Belongs to the class-I aminoacyl-tRNA synthetase family. As to quaternary structure, monomer.

It is found in the cytoplasm. It catalyses the reaction tRNA(Arg) + L-arginine + ATP = L-arginyl-tRNA(Arg) + AMP + diphosphate. The sequence is that of Arginine--tRNA ligase from Burkholderia mallei (strain NCTC 10247).